A 388-amino-acid polypeptide reads, in one-letter code: P2X purinoceptor 4 (388 aa).

Topologically, residues 1 to 33 (MTGCCTVLGAFLFEYDTPRIVLIRSRKVGLMNR) are cytoplasmic. The helical transmembrane segment at 34-54 (TVQLLILAYVIGWVFVWEKGY) threads the bilayer. At 55-338 (QETDSVVSSV…KFDIIPTMIN (284 aa)) the chain is on the extracellular side. Residues Lys67 and Lys69 each contribute to the ATP site. The CTP site is built by Lys67 and Lys69. N-linked (GlcNAc...) asparagine glycans are attached at residues Asn75, Asn110, Asn131, Asn153, and Asn184. 3 disulfide bridges follow: Cys116-Cys165, Cys126-Cys149, and Cys132-Cys159. Positions 186 and 188 each coordinate ATP. CTP is bound at residue Thr186. N-linked (GlcNAc...) asparagine glycans are attached at residues Asn199 and Asn208. Cystine bridges form between Cys217/Cys227 and Cys261/Cys270. Positions 293, 295, and 313 each coordinate ATP. CTP is bound by residues Asn293, Arg295, and Lys313. A helical membrane pass occupies residues 339–359 (IGSGLALLGVATVLCDVIVLY). The Cytoplasmic segment spans residues 360–388 (CMKKRYYYREKKYKYVEDYEQGLGNQMEQ).

Belongs to the P2X receptor family. Functional P2RXs are organized as homomeric and heteromeric trimers. Forms heterotrimer with P2RX1. Interacts with P2RX7 (via C-terminus); this interaction is functional only in the presence of ATP. Forms heterotrimer with P2RX4; functional differences between homomeric P2RX4 and P2RX4/6 heterotrimer are minor. Interacts with AP1M2.

The protein localises to the cell membrane. Its subcellular location is the lysosome membrane. It catalyses the reaction K(+)(in) = K(+)(out). It carries out the reaction Na(+)(in) = Na(+)(out). The catalysed reaction is Ca(2+)(in) = Ca(2+)(out). Its activity is regulated as follows. Activated by ATP. pH-dependent and inhibited by acidic pH. ATP-gated nonselective transmembrane cation channel permeable to potassium, sodium and calcium. CTP, but not GTP or UTP, functions as a weak affinity agonist for P2RX4. Activated by extracellularly released ATP, it plays multiple role in immunity and central nervous system physiology. Could also function as an ATP-gated cation channel of lysosomal membranes. This Bos taurus (Bovine) protein is P2X purinoceptor 4 (P2RX4).